Reading from the N-terminus, the 708-residue chain is Polyribonucleotide nucleotidyltransferase (708 aa).

Mg(2+) is bound by residues aspartate 490 and aspartate 496. Positions 557-619 constitute a KH domain; it reads PRIETMTIPK…KSIDDAIRLI (63 aa). The 71-residue stretch at 629 to 699 folds into the S1 motif domain; sequence GEVYKGKVRS…KTGKFKLSRK (71 aa).

This sequence belongs to the polyribonucleotide nucleotidyltransferase family. The cofactor is Mg(2+).

The protein resides in the cytoplasm. It catalyses the reaction RNA(n+1) + phosphate = RNA(n) + a ribonucleoside 5'-diphosphate. In terms of biological role, involved in mRNA degradation. Catalyzes the phosphorolysis of single-stranded polyribonucleotides processively in the 3'- to 5'-direction. This chain is Polyribonucleotide nucleotidyltransferase, found in Bacteroides fragilis (strain ATCC 25285 / DSM 2151 / CCUG 4856 / JCM 11019 / LMG 10263 / NCTC 9343 / Onslow / VPI 2553 / EN-2).